Here is a 269-residue protein sequence, read N- to C-terminus: Gem-associated protein 2 (269 aa).

2 positions are modified to phosphoserine: Ser70 and Ser155.

It belongs to the gemin-2 family. In terms of assembly, monomer. Part of the core SMN complex that contains SMN1, GEMIN2/SIP1, DDX20/GEMIN3, GEMIN4, GEMIN5, GEMIN6, GEMIN7, GEMIN8 and STRAP/UNRIP. Part of the SMN-Sm complex that contains SMN1, GEMIN2/SIP1, DDX20/GEMIN3, GEMIN4, GEMIN5, GEMIN6, GEMIN7, GEMIN8, STRAP/UNRIP and the Sm proteins SNRPB, SNRPD1, SNRPD2, SNRPD3, SNRPE, SNRPF and SNRPG. Interacts with GEMIN5; the interaction is direct. Interacts (via C-terminus) with SMN1; the interaction is direct. Interacts with SNRPD1; the interaction is direct. Interacts with SNRPD2; the interaction is direct. Interacts (via N-terminus) with SNRPF; the interaction is direct. Interacts (via N-terminus) with SNRPE; the interaction is direct. Interacts (via N-terminus) with SNRPG; the interaction is direct.

The protein localises to the nucleus. The protein resides in the gem. It is found in the cytoplasm. Functionally, the SMN complex catalyzes the assembly of small nuclear ribonucleoproteins (snRNPs), the building blocks of the spliceosome, and thereby plays an important role in the splicing of cellular pre-mRNAs. Most spliceosomal snRNPs contain a common set of Sm proteins SNRPB, SNRPD1, SNRPD2, SNRPD3, SNRPE, SNRPF and SNRPG that assemble in a heptameric protein ring on the Sm site of the small nuclear RNA to form the core snRNP (Sm core). In the cytosol, the Sm proteins SNRPD1, SNRPD2, SNRPE, SNRPF and SNRPG (5Sm) are trapped in an inactive 6S pICln-Sm complex by the chaperone CLNS1A that controls the assembly of the core snRNP. To assemble core snRNPs, the SMN complex accepts the trapped 5Sm proteins from CLNS1A. Binding of snRNA inside 5Sm ultimately triggers eviction of the SMN complex, thereby allowing binding of SNRPD3 and SNRPB to complete assembly of the core snRNP. Within the SMN complex, GEMIN2 constrains the conformation of 5Sm, thereby promoting 5Sm binding to snRNA containing the snRNP code (a nonameric Sm site and a 3'-adjacent stem-loop), thus preventing progression of assembly until a cognate substrate is bound. This is Gem-associated protein 2 from Mus musculus (Mouse).